The primary structure comprises 290 residues: 2-dehydro-3-deoxy-phosphogluconate/2-dehydro-3-deoxy-6-phosphogalactonate aldolase (290 aa).

Residues 42-43 (TT), 129-131 (YNY), and 155-157 (KDT) each bind substrate. The active-site Schiff-base intermediate with substrate is the lysine 155.

The protein belongs to the DapA family. KDPG aldolase subfamily. As to quaternary structure, homotetramer; dimer of dimers.

It catalyses the reaction 2-dehydro-3-deoxy-6-phospho-D-gluconate = D-glyceraldehyde 3-phosphate + pyruvate. The enzyme catalyses 2-dehydro-3-deoxy-6-phospho-D-galactonate = D-glyceraldehyde 3-phosphate + pyruvate. It functions in the pathway carbohydrate acid metabolism; 2-dehydro-3-deoxy-D-gluconate degradation; D-glyceraldehyde 3-phosphate and pyruvate from 2-dehydro-3-deoxy-D-gluconate: step 2/2. In terms of biological role, involved in the degradation of glucose and galactose via the Entner-Doudoroff pathway. Catalyzes the reversible cleavage of 2-keto-3-deoxy-6-phosphogluconate (KDPG) and 2-keto-3-deoxygluconate (KDG) forming pyruvate and glyceraldehyde 3-phosphate or glyceraldehyde, respectively. It is also able to catalyze the reversible cleavage of 2-keto-3-deoxy-6-phosphogalactonate (KDPGal) and 2-keto-3-deoxygalactonate (KDGal). This is 2-dehydro-3-deoxy-phosphogluconate/2-dehydro-3-deoxy-6-phosphogalactonate aldolase (kdgA) from Sulfurisphaera tokodaii (strain DSM 16993 / JCM 10545 / NBRC 100140 / 7) (Sulfolobus tokodaii).